A 239-amino-acid polypeptide reads, in one-letter code: tRNA (guanine-N(1)-)-methyltransferase (239 aa).

S-adenosyl-L-methionine contacts are provided by residues G108 and L127–L132.

Belongs to the RNA methyltransferase TrmD family. Homodimer.

It localises to the cytoplasm. The enzyme catalyses guanosine(37) in tRNA + S-adenosyl-L-methionine = N(1)-methylguanosine(37) in tRNA + S-adenosyl-L-homocysteine + H(+). Specifically methylates guanosine-37 in various tRNAs. This Streptococcus pneumoniae (strain P1031) protein is tRNA (guanine-N(1)-)-methyltransferase.